Reading from the N-terminus, the 150-residue chain is Small ribosomal subunit protein bS6 (150 aa).

Residues 99 to 150 (GPSAMLQKRDRDDRGERGERGFGGGGFGGGRDREDRPRRGRDREEAATEETF) form a disordered region. Composition is skewed to basic and acidic residues over residues 105–118 (QKRD…RGER) and 128–144 (GRDR…REEA).

It belongs to the bacterial ribosomal protein bS6 family.

Functionally, binds together with bS18 to 16S ribosomal RNA. The protein is Small ribosomal subunit protein bS6 of Azorhizobium caulinodans (strain ATCC 43989 / DSM 5975 / JCM 20966 / LMG 6465 / NBRC 14845 / NCIMB 13405 / ORS 571).